The sequence spans 320 residues: MLNDLKLSLQYILPKLWLTRLAGWGASKRAGWLTKLVIDLFVKYYKVDMKEAQKPDTAAYRTFNDFFVRPLRDDVRPLNTDPNVLVMPADGVISQLGAIEDDKILQAKGHDYSLEALLAGNYQMAGLFRNGSFATTYLSPRDYHRVHMPCNGILREMIYVPGDLFSVNHLTAQNVPNLFARNERVICLFDTEFGPMAQILVGATIVGSIETVWSGTVTPPREGIIKRWTWPAGDSEGSVALLKGQEMGRFKLGSTVINLFAPGQVKLVDSLQSLSVTKIGQPLATAVEASTAAEPAPLPEEEIRAEHRASPLVDDTQDQG.

Active-site charge relay system; for autoendoproteolytic cleavage activity residues include aspartate 90, histidine 147, and serine 254. The active-site Schiff-base intermediate with substrate; via pyruvic acid; for decarboxylase activity is the serine 254. The residue at position 254 (serine 254) is a Pyruvic acid (Ser); by autocatalysis. Residues 288 to 320 (EASTAAEPAPLPEEEIRAEHRASPLVDDTQDQG) are disordered.

Belongs to the phosphatidylserine decarboxylase family. PSD-B subfamily. Prokaryotic type I sub-subfamily. Heterodimer of a large membrane-associated beta subunit and a small pyruvoyl-containing alpha subunit. It depends on pyruvate as a cofactor. Post-translationally, is synthesized initially as an inactive proenzyme. Formation of the active enzyme involves a self-maturation process in which the active site pyruvoyl group is generated from an internal serine residue via an autocatalytic post-translational modification. Two non-identical subunits are generated from the proenzyme in this reaction, and the pyruvate is formed at the N-terminus of the alpha chain, which is derived from the carboxyl end of the proenzyme. The autoendoproteolytic cleavage occurs by a canonical serine protease mechanism, in which the side chain hydroxyl group of the serine supplies its oxygen atom to form the C-terminus of the beta chain, while the remainder of the serine residue undergoes an oxidative deamination to produce ammonia and the pyruvoyl prosthetic group on the alpha chain. During this reaction, the Ser that is part of the protease active site of the proenzyme becomes the pyruvoyl prosthetic group, which constitutes an essential element of the active site of the mature decarboxylase.

It localises to the cell membrane. The catalysed reaction is a 1,2-diacyl-sn-glycero-3-phospho-L-serine + H(+) = a 1,2-diacyl-sn-glycero-3-phosphoethanolamine + CO2. Its pathway is phospholipid metabolism; phosphatidylethanolamine biosynthesis; phosphatidylethanolamine from CDP-diacylglycerol: step 2/2. Its function is as follows. Catalyzes the formation of phosphatidylethanolamine (PtdEtn) from phosphatidylserine (PtdSer). This Klebsiella pneumoniae (strain 342) protein is Phosphatidylserine decarboxylase proenzyme.